Reading from the N-terminus, the 424-residue chain is Histidine--tRNA ligase (424 aa).

Belongs to the class-II aminoacyl-tRNA synthetase family. As to quaternary structure, homodimer.

It is found in the cytoplasm. The enzyme catalyses tRNA(His) + L-histidine + ATP = L-histidyl-tRNA(His) + AMP + diphosphate + H(+). The chain is Histidine--tRNA ligase from Salmonella dublin (strain CT_02021853).